Consider the following 252-residue polypeptide: Cell division protein ZapD (252 aa).

Belongs to the ZapD family. In terms of assembly, interacts with FtsZ.

It is found in the cytoplasm. In terms of biological role, cell division factor that enhances FtsZ-ring assembly. Directly interacts with FtsZ and promotes bundling of FtsZ protofilaments, with a reduction in FtsZ GTPase activity. This is Cell division protein ZapD from Cupriavidus metallidurans (strain ATCC 43123 / DSM 2839 / NBRC 102507 / CH34) (Ralstonia metallidurans).